We begin with the raw amino-acid sequence, 203 residues long: Outer-membrane lipoprotein carrier protein (203 aa).

The first 21 residues, 1 to 21 (MKKLAITCALLSGMVVSQVWA), serve as a signal peptide directing secretion.

Belongs to the LolA family. Monomer.

The protein localises to the periplasm. Its function is as follows. Participates in the translocation of lipoproteins from the inner membrane to the outer membrane. Only forms a complex with a lipoprotein if the residue after the N-terminal Cys is not an aspartate (The Asp acts as a targeting signal to indicate that the lipoprotein should stay in the inner membrane). This chain is Outer-membrane lipoprotein carrier protein, found in Klebsiella pneumoniae subsp. pneumoniae (strain ATCC 700721 / MGH 78578).